A 213-amino-acid chain; its full sequence is MKLGLLGGTFNPIHLAHLRIAEEAREAAGLDQVLFIPAADPPHKPLAGDVSFELRAAMVQRAIAANPAFRFSDIEAHRAGKSYTVDTLTALRTARPGDELHFIIGSDSFLELGLWHRYADIFPLASLIVLERPEKAITEPLQQLPELVRDQFVQEAGNLVRHSSGTSIRFVIGTRLDISSSQLRERVARQQSIRYLVPPEIESFITQKGLYQP.

It belongs to the NadD family.

It catalyses the reaction nicotinate beta-D-ribonucleotide + ATP + H(+) = deamido-NAD(+) + diphosphate. The protein operates within cofactor biosynthesis; NAD(+) biosynthesis; deamido-NAD(+) from nicotinate D-ribonucleotide: step 1/1. Catalyzes the reversible adenylation of nicotinate mononucleotide (NaMN) to nicotinic acid adenine dinucleotide (NaAD). The chain is Probable nicotinate-nucleotide adenylyltransferase from Trichlorobacter lovleyi (strain ATCC BAA-1151 / DSM 17278 / SZ) (Geobacter lovleyi).